Reading from the N-terminus, the 375-residue chain is Acetylornithine aminotransferase (375 aa).

Residues 102-103 and phenylalanine 129 contribute to the pyridoxal 5'-phosphate site; that span reads GA. Arginine 132 serves as a coordination point for N(2)-acetyl-L-ornithine. Residue 214–217 coordinates pyridoxal 5'-phosphate; it reads DEVQ. Residue lysine 243 is modified to N6-(pyridoxal phosphate)lysine. Serine 271 is a binding site for N(2)-acetyl-L-ornithine. Threonine 272 contacts pyridoxal 5'-phosphate.

The protein belongs to the class-III pyridoxal-phosphate-dependent aminotransferase family. ArgD subfamily. In terms of assembly, homodimer. Pyridoxal 5'-phosphate serves as cofactor.

The protein resides in the cytoplasm. It carries out the reaction N(2)-acetyl-L-ornithine + 2-oxoglutarate = N-acetyl-L-glutamate 5-semialdehyde + L-glutamate. It functions in the pathway amino-acid biosynthesis; L-arginine biosynthesis; N(2)-acetyl-L-ornithine from L-glutamate: step 4/4. The polypeptide is Acetylornithine aminotransferase (Archaeoglobus fulgidus (strain ATCC 49558 / DSM 4304 / JCM 9628 / NBRC 100126 / VC-16)).